Reading from the N-terminus, the 393-residue chain is Acetylornithine aminotransferase (393 aa).

Residues 100 to 101 and phenylalanine 132 each bind pyridoxal 5'-phosphate; that span reads GT. Position 135 (arginine 135) interacts with N(2)-acetyl-L-ornithine. Residue 217-220 coordinates pyridoxal 5'-phosphate; it reads DEIQ. Lysine 246 is modified (N6-(pyridoxal phosphate)lysine). Serine 275 serves as a coordination point for N(2)-acetyl-L-ornithine. Threonine 276 provides a ligand contact to pyridoxal 5'-phosphate.

The protein belongs to the class-III pyridoxal-phosphate-dependent aminotransferase family. ArgD subfamily. As to quaternary structure, homodimer. Pyridoxal 5'-phosphate is required as a cofactor.

The protein resides in the cytoplasm. It catalyses the reaction N(2)-acetyl-L-ornithine + 2-oxoglutarate = N-acetyl-L-glutamate 5-semialdehyde + L-glutamate. It participates in amino-acid biosynthesis; L-arginine biosynthesis; N(2)-acetyl-L-ornithine from L-glutamate: step 4/4. This chain is Acetylornithine aminotransferase, found in Campylobacter jejuni subsp. jejuni serotype O:2 (strain ATCC 700819 / NCTC 11168).